We begin with the raw amino-acid sequence, 184 residues long: Der GTPase-activating protein YihI (184 aa).

Disordered stretches follow at residues Met1–Ser106 and Leu159–Leu184. The segment covering Val8 to Arg32 has biased composition (basic and acidic residues). Residues Leu159 to Glu169 are compositionally biased toward acidic residues.

Belongs to the YihI family. As to quaternary structure, interacts with Der.

Functionally, a GTPase-activating protein (GAP) that modifies Der/EngA GTPase function. May play a role in ribosome biogenesis. In Pectobacterium atrosepticum (strain SCRI 1043 / ATCC BAA-672) (Erwinia carotovora subsp. atroseptica), this protein is Der GTPase-activating protein YihI.